The following is a 277-amino-acid chain: Large ribosomal subunit protein uL2c (277 aa).

2 disordered regions span residues 36–56 and 225–259; these read NKHSKKGRNNRGIITSRHRGG and MNSVDHPHGGGEGKTSIGRKKPLTPWGRTALGSKS.

Belongs to the universal ribosomal protein uL2 family. In terms of assembly, part of the 50S ribosomal subunit.

Its subcellular location is the plastid. It localises to the chloroplast. The polypeptide is Large ribosomal subunit protein uL2c (rpl2) (Psilotum nudum (Whisk fern)).